Here is a 209-residue protein sequence, read N- to C-terminus: Ion-translocating oxidoreductase complex subunit G (209 aa).

Residues 9 to 29 (ATTLALFAASTTAVTAVVNML) form a helical membrane-spanning segment. At Thr-175 the chain carries FMN phosphoryl threonine.

Belongs to the RnfG family. In terms of assembly, the complex is composed of six subunits: RnfA, RnfB, RnfC, RnfD, RnfE and RnfG. FMN is required as a cofactor.

The protein resides in the cell inner membrane. Functionally, part of a membrane-bound complex that couples electron transfer with translocation of ions across the membrane. In Pectobacterium atrosepticum (strain SCRI 1043 / ATCC BAA-672) (Erwinia carotovora subsp. atroseptica), this protein is Ion-translocating oxidoreductase complex subunit G.